Consider the following 188-residue polypeptide: Probable manganese efflux pump MntP (188 aa).

6 consecutive transmembrane segments (helical) span residues 3–23 (YTAT…ASIG), 41–61 (LIFG…GILA), 66–86 (LEWN…RMII), 106–128 (WLLV…GLAF), 143–163 (ATLI…PMLG), and 168–188 (ILGG…HFHG).

It belongs to the MntP (TC 9.B.29) family.

The protein localises to the cell inner membrane. Functionally, probably functions as a manganese efflux pump. The protein is Probable manganese efflux pump MntP of Salmonella heidelberg (strain SL476).